The primary structure comprises 201 residues: MAEKFTQHTGLVVPLDAANVDTDAIIPKQFLQKVTRTGFGAHLFNDWRFLDDKGEQPNPEFVLNFPEYQGASILLARENFGCGSSREHAPWALTDYGFKVVIAPSFADIFYGNSFNNQLLPVTLSDEEVDEMFALVKANPGIRFEVDLEAQVVKAGDKSYSFSIDAFRRHCMLNGLDSIGLTLQHEDAIAAYEKKQPAFMG.

It belongs to the LeuD family. LeuD type 1 subfamily. As to quaternary structure, heterodimer of LeuC and LeuD.

It catalyses the reaction (2R,3S)-3-isopropylmalate = (2S)-2-isopropylmalate. The protein operates within amino-acid biosynthesis; L-leucine biosynthesis; L-leucine from 3-methyl-2-oxobutanoate: step 2/4. Its function is as follows. Catalyzes the isomerization between 2-isopropylmalate and 3-isopropylmalate, via the formation of 2-isopropylmaleate. The chain is 3-isopropylmalate dehydratase small subunit from Cronobacter sakazakii (strain ATCC BAA-894) (Enterobacter sakazakii).